Consider the following 33-residue polypeptide: Protamine (33 aa).

Positions 1 to 33 (MPRRRRSSSRPVRRRRRPRVSRRRRRRGGRRRR) are disordered.

In terms of tissue distribution, testis.

The protein localises to the nucleus. It is found in the chromosome. Functionally, protamines substitute for histones in the chromatin of sperm during the haploid phase of spermatogenesis. They compact sperm DNA into a highly condensed, stable and inactive complex. This is Protamine from Oncorhynchus keta (Chum salmon).